Here is a 383-residue protein sequence, read N- to C-terminus: MGEVGPTNRTKTKLDKQQESENRVPHEPPPFTLSDLKKAIPPHCFERSLVKSFYHVIHDIIILSFFYYVAANYIPMLPQNLRYVAWPIYWAIQGCVQLGILVLGHECGHHAFSDYQWVDDMVGFVLHSSQLIPYFSWKHSHRRHHSNTASIERDEVYPPAYKNDLPWFAKYLRNPVGRFLMIFGALLFGWPSYLLFNANGRLYDRFASHYDPQSPIFNNRERLQVIASDVGLVFAYFVLYKIALAKGFVWLICVYGVPYVILNGLIVLITFLQHTHPNLPRYDLSEWDWLRGALSTVDRDYGMLNKVFHNVTDTHLVHHLFTTMPHYRAKEATEVIKPILGDYYKFDDTPFLKALWKDMGKCIYVESDVPGKNKGVYWYNNDI.

The segment at 1–30 is disordered; the sequence is MGEVGPTNRTKTKLDKQQESENRVPHEPPP. A compositionally biased stretch (basic and acidic residues) spans 12 to 26; it reads TKLDKQQESENRVPH. The next 2 helical transmembrane spans lie at 56 to 76 and 84 to 104; these read VIHD…YIPM and VAWP…LVLG. The short motif at 105–109 is the Histidine box-1 element; sequence HECGH. The short motif at 141–145 is the Histidine box-2 element; sequence HRRHH. The next 3 helical transmembrane spans lie at 179–199, 225–245, and 249–269; these read FLMI…FNAN, VIAS…IALA, and VWLI…IVLI. The Histidine box-3 motif lies at 315-319; the sequence is HLVHH.

Belongs to the fatty acid desaturase type 1 family. In terms of tissue distribution, expressed in developing seeds, but not in leaves.

The protein localises to the membrane. It catalyses the reaction a (9Z,12Z)-octadecadienoyl-containing glycerolipid + 2 Fe(II)-[cytochrome b5] + O2 + 2 H(+) = a (9Z,11E,13E)-octadecatrienoyl-containing glycerolipid + 2 Fe(III)-[cytochrome b5] + 2 H2O. The enzyme catalyses (9Z,12Z,15Z)-octadecatrienoyl-containing glycerolipid + 2 Fe(II)-[cytochrome b5] + O2 + 2 H(+) = a (9Z,11E,13E,15Z)-octadecatetraenoyl-containing glycerolipid + 2 Fe(III)-[cytochrome b5] + 2 H2O. Its pathway is lipid metabolism; polyunsaturated fatty acid biosynthesis. In terms of biological role, converts linoleic acid to alpha-eleostearic acid (18:3(9Z,11E,13E)) and alpha-linolenic acid to alpha-parinaric acid (18:4(9Z,11E, 13E, 15Z)). Converts a single cis double bond at carbon 12 to two conjugated trans bonds at positions 11 and 13. This chain is Delta(12) acyl-lipid conjugase (11E,13E-forming), found in Impatiens balsamina (Balsam).